Here is a 597-residue protein sequence, read N- to C-terminus: Elongation factor 4 (597 aa).

The tr-type G domain maps to 2–184 (KNIRNFSIIA…TIVAKVPAPE (183 aa)). GTP contacts are provided by residues 14 to 19 (DHGKST) and 131 to 134 (NKID).

The protein belongs to the TRAFAC class translation factor GTPase superfamily. Classic translation factor GTPase family. LepA subfamily.

The protein resides in the cell inner membrane. It carries out the reaction GTP + H2O = GDP + phosphate + H(+). Functionally, required for accurate and efficient protein synthesis under certain stress conditions. May act as a fidelity factor of the translation reaction, by catalyzing a one-codon backward translocation of tRNAs on improperly translocated ribosomes. Back-translocation proceeds from a post-translocation (POST) complex to a pre-translocation (PRE) complex, thus giving elongation factor G a second chance to translocate the tRNAs correctly. Binds to ribosomes in a GTP-dependent manner. The polypeptide is Elongation factor 4 (Francisella tularensis subsp. mediasiatica (strain FSC147)).